Reading from the N-terminus, the 187-residue chain is Putative protein SSX8 (187 aa).

2 disordered regions span residues 1 to 21 (MNGDDAFAKRPRDDDKASEKR) and 109 to 187 (PKIM…EDDE). A KRAB-related domain is found at 20 to 83 (KRSKAFNDIA…KQATDFQGNY (64 aa)). At Ser-123 the chain carries Phosphoserine. The span at 152–168 (KRSGPKRGRHAWTHRLR) shows a compositional bias: basic residues.

It belongs to the SSX family. As to expression, not detected in any normal or tumor tissues.

Its function is as follows. Could act as a modulator of transcription. This Homo sapiens (Human) protein is Putative protein SSX8.